A 55-amino-acid polypeptide reads, in one-letter code: Sec-independent protein translocase protein TatA (55 aa).

Residues 1 to 21 form a helical membrane-spanning segment; that stretch reads MSLGPWQLFLVLIIILVLFGA.

Belongs to the TatA/E family. In terms of assembly, the Tat system comprises two distinct complexes: a TatABC complex, containing multiple copies of TatA, TatB and TatC subunits, and a separate TatA complex, containing only TatA subunits. Substrates initially bind to the TatABC complex, which probably triggers association of the separate TatA complex to form the active translocon.

Its subcellular location is the cell membrane. In terms of biological role, part of the twin-arginine translocation (Tat) system that transports large folded proteins containing a characteristic twin-arginine motif in their signal peptide across membranes. TatA could form the protein-conducting channel of the Tat system. The polypeptide is Sec-independent protein translocase protein TatA (Wolbachia pipientis wMel).